Consider the following 356-residue polypeptide: Phosphoribosyl pyrophosphate synthase-associated protein 1 (356 aa).

N-acetylmethionine is present on Met1. Residues Ser177 and Ser215 each carry the phosphoserine modification.

It belongs to the ribose-phosphate pyrophosphokinase family. In terms of assembly, binds to PRPS1 and PRPS2. Ubiquitous.

In terms of biological role, seems to play a negative regulatory role in 5-phosphoribose 1-diphosphate synthesis. The polypeptide is Phosphoribosyl pyrophosphate synthase-associated protein 1 (Prpsap1) (Rattus norvegicus (Rat)).